The sequence spans 405 residues: uncharacterized protein (405 aa).

A run of 12 helical transmembrane segments spans residues 19–39 (ILSIVMFNFASYLTIGLPLAV), 47–67 (VMGFSAFWAGLVISLQYFATL), 85–105 (IVVFGLCGCFLSGLGYLTAGL), 129–149 (SFAGTGSTLWGVGVVGSLHIG), 157–177 (IVTYGAMAMGAPLGVVFYHWG), 178–198 (GLQALALIIMGVALVAILLAI), 224–244 (GMALALASAGFGVIATFITLF), 252–272 (GAAFALTLFSCAFVGTRLLFP), 283–303 (VAMICFSVEIIGLLLVGVATM), 309–329 (IGVLLAGAGFSLVFPALGVVA), 344–364 (TYTVFMDLSLGVTGPLAGLVM), and 366–386 (WAGVPVIYLAAAGLVAIALLL).

The protein belongs to the major facilitator superfamily. YhhS family.

The protein resides in the cell inner membrane. This is an uncharacterized protein from Escherichia coli O157:H7.